The sequence spans 211 residues: Large ribosomal subunit protein bL9 (211 aa).

Positions 180–211 are disordered; the sequence is DDIGAAGMDDDDDDAPAPAQADPSSEESSEED.

This sequence belongs to the bacterial ribosomal protein bL9 family.

Its function is as follows. Binds to the 23S rRNA. The chain is Large ribosomal subunit protein bL9 from Jannaschia sp. (strain CCS1).